Reading from the N-terminus, the 195-residue chain is Peptidyl-tRNA hydrolase (195 aa).

Y17 is a tRNA binding site. The Proton acceptor role is filled by H22. The tRNA site is built by Y68, N70, and N116.

This sequence belongs to the PTH family. As to quaternary structure, monomer.

Its subcellular location is the cytoplasm. It carries out the reaction an N-acyl-L-alpha-aminoacyl-tRNA + H2O = an N-acyl-L-amino acid + a tRNA + H(+). Its function is as follows. Hydrolyzes ribosome-free peptidyl-tRNAs (with 1 or more amino acids incorporated), which drop off the ribosome during protein synthesis, or as a result of ribosome stalling. In terms of biological role, catalyzes the release of premature peptidyl moieties from peptidyl-tRNA molecules trapped in stalled 50S ribosomal subunits, and thus maintains levels of free tRNAs and 50S ribosomes. The polypeptide is Peptidyl-tRNA hydrolase (Shewanella sp. (strain ANA-3)).